The chain runs to 322 residues: Pyridoxal kinase (322 aa).

Residue methionine 1 is modified to N-acetylmethionine. Positions 22 and 57 each coordinate pyridoxal. Threonine 57 serves as a coordination point for pyridoxal 5'-phosphate. Phosphoserine is present on serine 69. Aspartate 123 serves as a coordination point for ATP. Aspartate 123 serves as a coordination point for Na(+). Aspartate 128 contacts Mg(2+). Threonine 158 serves as a coordination point for Na(+). Residue 160–163 participates in ATP binding; it reads NQFE. Position 174 is a phosphoserine (serine 174). Threonine 196 provides a ligand contact to Na(+). 196 to 197 provides a ligand contact to ATP; it reads TS. Serine 223 carries the post-translational modification Phosphoserine. ATP-binding positions include 236 to 238 and threonine 243; that span reads VDA. 244–245 is a pyridoxal 5'-phosphate binding site; the sequence is GD. Aspartate 245 serves as the catalytic Proton acceptor. Serine 295 carries the post-translational modification Phosphoserine.

It belongs to the pyridoxine kinase family. Homodimer. Requires Zn(2+) as cofactor. It depends on Mg(2+) as a cofactor. The N-terminus is blocked.

It localises to the cytoplasm. The protein resides in the cytosol. The catalysed reaction is pyridoxal + ATP = pyridoxal 5'-phosphate + ADP + H(+). It catalyses the reaction pyridoxamine + ATP = pyridoxamine 5'-phosphate + ADP + H(+). The enzyme catalyses pyridoxine + ATP = pyridoxine 5'-phosphate + ADP + H(+). Its pathway is cofactor metabolism; pyridoxal 5'-phosphate salvage; pyridoxal 5'-phosphate from pyridoxal: step 1/1. The protein operates within cofactor metabolism; pyridoxal 5'-phosphate salvage; pyridoxine 5'-phosphate from pyridoxine: step 1/1. It functions in the pathway cofactor metabolism; pyridoxal 5'-phosphate salvage; pyridoxamine 5'-phosphate from pyridoxamine: step 1/1. Activity is increased in the presence of K(+)or Na(+). Its function is as follows. Catalyzes the phosphorylation of the dietary vitamin B6 vitamers pyridoxal (PL), pyridoxine (PN) and pyridoxamine (PM) to form pyridoxal 5'-phosphate (PLP), pyridoxine 5'-phosphate (PNP) and pyridoxamine 5'-phosphate (PMP), respectively. PLP is the active form of vitamin B6, and acts as a cofactor for over 140 different enzymatic reactions. The chain is Pyridoxal kinase (PDXK) from Sus scrofa (Pig).